The primary structure comprises 362 residues: L-asparaginase 2-1 (362 aa).

A signal peptide spans 1-25; sequence MRSLNTLLLSLFVAMSSGAPLLKIR. The N-linked (GlcNAc...) asparagine glycan is linked to Asn29. The region spanning 33–359 is the Asparaginase/glutaminase domain; the sequence is PSIKIFGTGG…DQIRSVFSGV (327 aa). Catalysis depends on Thr43, which acts as the O-isoaspartyl threonine intermediate. Ser89 contacts substrate. N-linked (GlcNAc...) asparagine glycosylation is present at Asn93. 122 to 123 is a binding site for substrate; sequence TD. Asn239 carries N-linked (GlcNAc...) asparagine glycosylation.

It belongs to the asparaginase 1 family.

Its subcellular location is the secreted. It localises to the periplasm. The enzyme catalyses L-asparagine + H2O = L-aspartate + NH4(+). The chain is L-asparaginase 2-1 (ASP3-1) from Saccharomyces cerevisiae (strain ATCC 204508 / S288c) (Baker's yeast).